Here is a 282-residue protein sequence, read N- to C-terminus: 4-diphosphocytidyl-2-C-methyl-D-erythritol kinase (282 aa).

Lys-8 is a catalytic residue. Residue 91–101 (PVAAGLAGGST) coordinates ATP. The active site involves Asp-133.

It belongs to the GHMP kinase family. IspE subfamily.

It carries out the reaction 4-CDP-2-C-methyl-D-erythritol + ATP = 4-CDP-2-C-methyl-D-erythritol 2-phosphate + ADP + H(+). The protein operates within isoprenoid biosynthesis; isopentenyl diphosphate biosynthesis via DXP pathway; isopentenyl diphosphate from 1-deoxy-D-xylulose 5-phosphate: step 3/6. In terms of biological role, catalyzes the phosphorylation of the position 2 hydroxy group of 4-diphosphocytidyl-2C-methyl-D-erythritol. The polypeptide is 4-diphosphocytidyl-2-C-methyl-D-erythritol kinase (Symbiobacterium thermophilum (strain DSM 24528 / JCM 14929 / IAM 14863 / T)).